Here is a 318-residue protein sequence, read N- to C-terminus: MSAGGEHLKDEGTRRQVVLAGGIAGLVSRFCVAPLDVVKIRLQLQIHSLSDPTSHQNIKGPVYKGTLPTIRSIVREEGITGLWKGNIPAELMYVCYGAIQFAAYRTTTQALSQLDPYRLPPPAESFVAGATAGGLATASTYPLDLLRTRFAAQGTERVYTSLYASVRDIAQNEGPKGFFRGCSAAVGQIVPYMGLFFATYESLRPVMSGLHDLPFGSGDAAAGVVASVLAKTGVFPLDLVRKRLQVQGPTRSKYVHRNIPEYQGVYNTMAMIVRTQGMRGLYRGLTVSLFKAAPASAVTMWTYEKSLHYLRELEVASE.

The next 6 helical transmembrane spans lie at 12 to 28 (GTRR…GLVS), 91 to 107 (LMYV…YRTT), 125 to 141 (SFVA…ASTY), 181 to 197 (GCSA…GLFF), 221 to 237 (AAGV…VFPL), and 284 to 301 (GLTV…VTMW). Solcar repeat units lie at residues 12-110 (GTRR…TTQA), 120-206 (PPPA…LRPV), and 214-309 (PFGS…SLHY).

Belongs to the mitochondrial carrier (TC 2.A.29) family.

The protein localises to the mitochondrion inner membrane. Mitochondrial transporter that mediates uptake of thiamine pyrophosphate (ThPP) into mitochondria. This Aspergillus oryzae (strain ATCC 42149 / RIB 40) (Yellow koji mold) protein is Mitochondrial thiamine pyrophosphate carrier 1 (tpc1).